The following is an 895-amino-acid chain: Plasma membrane ATPase 1 (895 aa).

The segment at 1-53 (MSATEPTNEKVDKIVSDDEDEDIDQLVADLQSNPGAGDEEEEEENDSSFKAVP) is disordered. At 1–92 (MSATEPTNEK…AEEQENLVLK (92 aa)) the chain is on the cytoplasmic side. Over residues 7–16 (TNEKVDKIVS) the composition is skewed to basic and acidic residues. Positions 37–46 (GDEEEEEEND) are enriched in acidic residues. The chain crosses the membrane as a helical span at residues 93-113 (FVMFFVGPIQFVMEAAAVLAA). Residues 114 to 117 (GLED) lie on the Extracellular side of the membrane. The chain crosses the membrane as a helical span at residues 118–137 (WVDFGVICALLLLNAFVGFI). At 138–268 (QEYQAGSIVD…GTGHFTEVLN (131 aa)) the chain is on the cytoplasmic side. Residues 269–290 (GIGTTLLVFVIVTLLVVWVACF) traverse the membrane as a helical segment. Residues 291–301 (YRTVRIVPILR) lie on the Extracellular side of the membrane. A helical membrane pass occupies residues 302–324 (YTLAITIIGVPVGLPAVVTTTMA). Residues 325-696 (VGAAYLAKKQ…IAILNRSLDI (372 aa)) are Cytoplasmic-facing. Asp-355 serves as the catalytic 4-aspartylphosphate intermediate. Residues Asp-611 and Asp-615 each coordinate Mg(2+). Residues 697 to 715 (NLIVFIAIFADVATLAIAY) traverse the membrane as a helical segment. Topologically, residues 716 to 731 (DNAPYDPKPVKWNLPR) are extracellular. Residues 732 to 751 (LWGMSIVLGIILAIGTWITL) traverse the membrane as a helical segment. At 752-801 (TTMLLPKGGIIQNFGGLDGILFLQISLTENWLIFVTRAQGPFWSSIPSWQ) the chain is on the cytoplasmic side. The chain crosses the membrane as a helical span at residues 802-822 (LSGAVLIVDIIATCFTLFGWW). Residues 823 to 834 (SQNWTDIVTVVR) are Extracellular-facing. Residues 835-851 (TWIWSFGVFCVMGGAYY) form a helical membrane-spanning segment. At 852 to 895 (LMSTSEAFDNFCNGRKPQQHTDKRSLEDFLVSMQRVSTQHEKST) the chain is on the cytoplasmic side.

Belongs to the cation transport ATPase (P-type) (TC 3.A.3) family. Type IIIA subfamily.

The protein localises to the cell membrane. It carries out the reaction ATP + H2O + H(+)(in) = ADP + phosphate + 2 H(+)(out). The plasma membrane ATPase of plants and fungi is a hydrogen ion pump. The proton gradient it generates drives the active transport of nutrients by H(+)-symport. The resulting external acidification and/or internal alkinization may mediate growth responses. The sequence is that of Plasma membrane ATPase 1 (PMA1) from Candida albicans (Yeast).